The primary structure comprises 77 residues: Small ribosomal subunit protein bS18 (77 aa).

Belongs to the bacterial ribosomal protein bS18 family. In terms of assembly, part of the 30S ribosomal subunit. Forms a tight heterodimer with protein bS6.

Functionally, binds as a heterodimer with protein bS6 to the central domain of the 16S rRNA, where it helps stabilize the platform of the 30S subunit. In Lactobacillus helveticus (strain DPC 4571), this protein is Small ribosomal subunit protein bS18.